Consider the following 100-residue polypeptide: Urease subunit gamma (100 aa).

The protein belongs to the urease gamma subunit family. Heterotrimer of UreA (gamma), UreB (beta) and UreC (alpha) subunits. Three heterotrimers associate to form the active enzyme.

Its subcellular location is the cytoplasm. It catalyses the reaction urea + 2 H2O + H(+) = hydrogencarbonate + 2 NH4(+). It functions in the pathway nitrogen metabolism; urea degradation; CO(2) and NH(3) from urea (urease route): step 1/1. The polypeptide is Urease subunit gamma (Synechococcus sp. (strain WH7805)).